Reading from the N-terminus, the 241-residue chain is Uridylate kinase (241 aa).

15-18 (KLSG) is an ATP binding site. Positions 23 to 28 (GTEGFG) are involved in allosteric activation by GTP. UMP is bound at residue Gly-57. Gly-58 and Arg-62 together coordinate ATP. UMP contacts are provided by residues Asp-77 and 138–145 (TGNPFFTT). Thr-165, Phe-171, and Asp-174 together coordinate ATP.

Belongs to the UMP kinase family. In terms of assembly, homohexamer.

It localises to the cytoplasm. It carries out the reaction UMP + ATP = UDP + ADP. It participates in pyrimidine metabolism; CTP biosynthesis via de novo pathway; UDP from UMP (UMPK route): step 1/1. With respect to regulation, allosterically activated by GTP. Inhibited by UTP. Catalyzes the reversible phosphorylation of UMP to UDP. The protein is Uridylate kinase of Shigella dysenteriae serotype 1 (strain Sd197).